The primary structure comprises 230 residues: Ubiquitin carboxyl-terminal hydrolase isozyme L3 (230 aa).

Residues 5–229 form the UCH catalytic domain; the sequence is RWLPLEANPE…LRFNAIALSA (225 aa). Residues 8 to 13 form an interaction with ubiquitin region; that stretch reads PLEANP. Cysteine 95 functions as the Nucleophile in the catalytic mechanism. Serine 130 is subject to Phosphoserine. Residues 152 to 159 form an interaction with ubiquitin. Crossover loop which restricts access of large ubiquitin adducts to the active site region; it reads AHEGQTEA. The active-site Proton donor is histidine 169. The tract at residues 219–224 is interaction with ubiquitin; it reads ELRFNA.

It belongs to the peptidase C12 family. As to quaternary structure, preferentially binds diubiquitin; the interaction does not hydrolyze diubiquitin but, in vitro, inhibits the hydrolyzing activity on other substrates.

The protein localises to the cytoplasm. The enzyme catalyses Thiol-dependent hydrolysis of ester, thioester, amide, peptide and isopeptide bonds formed by the C-terminal Gly of ubiquitin (a 76-residue protein attached to proteins as an intracellular targeting signal).. With respect to regulation, inhibited by monoubiquitin and diubiquitin. Its function is as follows. Deubiquitinating enzyme (DUB) that controls levels of cellular ubiquitin through processing of ubiquitin precursors and ubiquitinated proteins. Thiol protease that recognizes and hydrolyzes a peptide bond at the C-terminal glycine of either ubiquitin or NEDD8. Has a 10-fold preference for Arg and Lys at position P3''. Deubiquitinates ENAC in apical compartments, thereby regulating apical membrane recycling. Indirectly increases the phosphorylation of IGFIR, AKT and FOXO1 and promotes insulin-signaling and insulin-induced adipogenesis. Required for stress-response retinal, skeletal muscle and germ cell maintenance. May be involved in working memory. Can hydrolyze UBB(+1), a mutated form of ubiquitin which is not effectively degraded by the proteasome. In Bos taurus (Bovine), this protein is Ubiquitin carboxyl-terminal hydrolase isozyme L3 (UCHL3).